The primary structure comprises 144 residues: Maximins z/Hv (144 aa).

The signal sequence occupies residues 1 to 18 (MNFKYIVAVSFLIASGYA). The propeptide occupies 19–43 (RSEENDVQSLSQREVLEEESLREIR). Asparagine 70 is subject to Asparagine amide. Residues 74–123 (TAEDHEVMKRLKAVMRDLDSLDHPEEASERETRGFNQEEIANLFTKKEKR) constitute a propeptide that is removed on maturation. Isoleucine 143 is subject to Isoleucine amide.

Belongs to the bombinin family. Expressed by the skin glands.

It localises to the secreted. Functionally, maximin-z shows antimicrobial activity against bacteria and against the fungus C.albicans. It has little hemolytic activity. In terms of biological role, maximin-Hv shows antimicrobial activity against bacteria and against the fungus C.albicans. Shows strong hemolytic activity. The protein is Maximins z/Hv of Bombina maxima (Giant fire-bellied toad).